The chain runs to 335 residues: uncharacterized protein (335 aa).

It belongs to the glycosyltransferase group 1 family. Glycosyltransferase 4 subfamily.

This is an uncharacterized protein from Sulfolobus islandicus rod-shaped virus 1 (SIRV-1).